Consider the following 581-residue polypeptide: Arginine--tRNA ligase (581 aa).

A 'HIGH' region motif is present at residues 126-136 (PNLAKEMHVGH).

The protein belongs to the class-I aminoacyl-tRNA synthetase family. In terms of assembly, monomer.

It localises to the cytoplasm. It carries out the reaction tRNA(Arg) + L-arginine + ATP = L-arginyl-tRNA(Arg) + AMP + diphosphate. The polypeptide is Arginine--tRNA ligase (Shewanella oneidensis (strain ATCC 700550 / JCM 31522 / CIP 106686 / LMG 19005 / NCIMB 14063 / MR-1)).